The chain runs to 471 residues: Transcription initiation factor TFIID subunit 7-like (471 aa).

Disordered stretches follow at residues methionine 1–threonine 84, serine 192–threonine 211, and glutamate 328–glutamate 377. Serine 199 is subject to Phosphoserine. Residues glycine 347–glutamate 377 show a composition bias toward acidic residues. A coiled-coil region spans residues glutamate 358–asparagine 433.

The protein belongs to the TAF7 family. TFIID is composed of TATA binding protein (TBP) and a number of TBP-associated factors (TAFs). TAF7L may replace TAF7 in a spermatogenesis-specific form of TFIID. Interacts with TBP; the interaction occurs in a sub-population of cells (pachytene and haploid round spermatids) and is developmentally regulated through differential intracellular localization of the two proteins. Interacts with TAF1. In terms of tissue distribution, testis-specific (at protein level). Expressed during spermatogenesis from spermatogonia stage up to the stage of round spermatids.

Its subcellular location is the nucleus. It localises to the cytoplasm. In terms of biological role, probably functions as a spermatogenesis-specific component of the DNA-binding general transcription factor complex TFIID, a multimeric protein complex that plays a central role in mediating promoter responses to various activators and repressors. May play a role in spermatogenesis. The protein is Transcription initiation factor TFIID subunit 7-like (Taf7l) of Mus musculus (Mouse).